Here is a 966-residue protein sequence, read N- to C-terminus: Leucine--tRNA ligase (966 aa).

A 'HIGH' region motif is present at residues 71–82; the sequence is PYPSGAGLHVGH. The segment at 561-580 is disordered; sequence YSPRTFDPDDADTKPETPLS. Over residues 571 to 580 the composition is skewed to basic and acidic residues; it reads ADTKPETPLS. The short motif at 734 to 738 is the 'KMSKS' region element; the sequence is KMGKS. Position 737 (Lys737) interacts with ATP.

The protein belongs to the class-I aminoacyl-tRNA synthetase family.

It localises to the cytoplasm. The enzyme catalyses tRNA(Leu) + L-leucine + ATP = L-leucyl-tRNA(Leu) + AMP + diphosphate. In Streptomyces coelicolor (strain ATCC BAA-471 / A3(2) / M145), this protein is Leucine--tRNA ligase.